The following is a 192-amino-acid chain: Orotate phosphoribosyltransferase (192 aa).

5-phospho-alpha-D-ribose 1-diphosphate is bound by residues Arg102, Lys103, Lys106, and 129 to 137; that span reads EDVVTTGRS. 2 residues coordinate orotate: Thr133 and Arg161.

Belongs to the purine/pyrimidine phosphoribosyltransferase family. PyrE subfamily. As to quaternary structure, homodimer. The cofactor is Mg(2+).

It catalyses the reaction orotidine 5'-phosphate + diphosphate = orotate + 5-phospho-alpha-D-ribose 1-diphosphate. The protein operates within pyrimidine metabolism; UMP biosynthesis via de novo pathway; UMP from orotate: step 1/2. In terms of biological role, catalyzes the transfer of a ribosyl phosphate group from 5-phosphoribose 1-diphosphate to orotate, leading to the formation of orotidine monophosphate (OMP). This chain is Orotate phosphoribosyltransferase, found in Prochlorococcus marinus (strain SARG / CCMP1375 / SS120).